Reading from the N-terminus, the 334-residue chain is 3-keto-steroid reductase/17-beta-hydroxysteroid dehydrogenase 7 (334 aa).

At 1–229 the chain is on the extracellular side; it reads MRKVVLITGA…VTCPGVVMTN (229 aa). 8-15 contributes to the NAD(+) binding site; it reads TGASSGIG. The N-linked (GlcNAc...) asparagine glycan is linked to N37. S171 contacts substrate. N178 is a glycosylation site (N-linked (GlcNAc...) asparagine). The active-site Proton acceptor is the Y193. A glycan (N-linked (GlcNAc...) asparagine) is linked at N229. A helical membrane pass occupies residues 230–250; that stretch reads LTYGILPPFVWTLLLPVIWLL. Residues 251–334 are Cytoplasmic-facing; sequence RFFAHAFTVT…ITIQKSDHHS (84 aa).

Belongs to the short-chain dehydrogenases/reductases (SDR) family. ERG27 subfamily. Binds to the short form of prolactin receptor. Post-translationally, phosphorylated. In terms of tissue distribution, most abundant in ovaries of pregnant animals.

The protein localises to the endoplasmic reticulum membrane. The enzyme catalyses 17beta-estradiol + NADP(+) = estrone + NADPH + H(+). It carries out the reaction a 3beta-hydroxysteroid + NADP(+) = a 3-oxosteroid + NADPH + H(+). It catalyses the reaction 4alpha-methyl-5alpha-cholest-7-en-3beta-ol + NADP(+) = 4alpha-methyl-5alpha-cholest-7-en-3-one + NADPH + H(+). The catalysed reaction is 4alpha-methyl-5alpha-cholest-8-en-3-one + NADPH + H(+) = 4alpha-methyl-5alpha-cholest-8-en-3beta-ol + NADP(+). The enzyme catalyses 3-dehydro-4alpha-methylzymosterol + NADPH + H(+) = 4alpha-methylzymosterol + NADP(+). It carries out the reaction zymosterone + NADPH + H(+) = zymosterol + NADP(+). It catalyses the reaction 5alpha-cholest-8-en-3-one + NADPH + H(+) = 5alpha-cholest-8-en-3beta-ol + NADP(+). The catalysed reaction is 5alpha-androstane-3beta,17beta-diol + NADP(+) = 17beta-hydroxy-5alpha-androstan-3-one + NADPH + H(+). The enzyme catalyses 5alpha-androstane-3alpha,17beta-diol + NADP(+) = 17beta-hydroxy-5alpha-androstan-3-one + NADPH + H(+). Its pathway is steroid biosynthesis; estrogen biosynthesis. It participates in steroid biosynthesis; zymosterol biosynthesis; zymosterol from lanosterol: step 5/6. Functionally, bifunctional enzyme involved in steroid-hormone metabolism and cholesterol biosynthesis. Catalyzes the NADP(H)-dependent reduction of estrogens and androgens and regulates the biological potency of these steroids. Converts estrone (E1) to a more potent estrogen, 17beta-estradiol (E2). Converts dihydrotestosterone (DHT) to an inactive form. Also participates in the post-squalene cholesterol biosynthesis, as a 3-ketosteroid reductase. This chain is 3-keto-steroid reductase/17-beta-hydroxysteroid dehydrogenase 7 (Hsd17b7), found in Rattus norvegicus (Rat).